The chain runs to 280 residues: Diaminopimelate epimerase (280 aa).

3 residues coordinate substrate: Asn-12, Gln-45, and Asn-65. The Proton donor role is filled by Cys-74. Residues 75–76 (GN), Asn-163, Asn-196, and 214–215 (ER) each bind substrate. The Proton acceptor role is filled by Cys-223. Substrate is bound at residue 224–225 (GT).

It belongs to the diaminopimelate epimerase family. Homodimer.

It localises to the cytoplasm. It carries out the reaction (2S,6S)-2,6-diaminopimelate = meso-2,6-diaminopimelate. Its pathway is amino-acid biosynthesis; L-lysine biosynthesis via DAP pathway; DL-2,6-diaminopimelate from LL-2,6-diaminopimelate: step 1/1. Functionally, catalyzes the stereoinversion of LL-2,6-diaminopimelate (L,L-DAP) to meso-diaminopimelate (meso-DAP), a precursor of L-lysine and an essential component of the bacterial peptidoglycan. In Shewanella sediminis (strain HAW-EB3), this protein is Diaminopimelate epimerase.